A 407-amino-acid polypeptide reads, in one-letter code: Probable tRNA sulfurtransferase (407 aa).

The region spanning 61–165 (NEITYRLSKI…LDAIYMYEEV (105 aa)) is the THUMP domain. Residues 183 to 184 (ML), 208 to 209 (HF), Arg-265, Gly-287, and Gln-296 contribute to the ATP site.

Belongs to the ThiI family.

It is found in the cytoplasm. It carries out the reaction [ThiI sulfur-carrier protein]-S-sulfanyl-L-cysteine + a uridine in tRNA + 2 reduced [2Fe-2S]-[ferredoxin] + ATP + H(+) = [ThiI sulfur-carrier protein]-L-cysteine + a 4-thiouridine in tRNA + 2 oxidized [2Fe-2S]-[ferredoxin] + AMP + diphosphate. It catalyses the reaction [ThiS sulfur-carrier protein]-C-terminal Gly-Gly-AMP + S-sulfanyl-L-cysteinyl-[cysteine desulfurase] + AH2 = [ThiS sulfur-carrier protein]-C-terminal-Gly-aminoethanethioate + L-cysteinyl-[cysteine desulfurase] + A + AMP + 2 H(+). It functions in the pathway cofactor biosynthesis; thiamine diphosphate biosynthesis. Its function is as follows. Catalyzes the ATP-dependent transfer of a sulfur to tRNA to produce 4-thiouridine in position 8 of tRNAs, which functions as a near-UV photosensor. Also catalyzes the transfer of sulfur to the sulfur carrier protein ThiS, forming ThiS-thiocarboxylate. This is a step in the synthesis of thiazole, in the thiamine biosynthesis pathway. The sulfur is donated as persulfide by IscS. This is Probable tRNA sulfurtransferase from Staphylococcus aureus (strain MSSA476).